Consider the following 375-residue polypeptide: Erythronate-4-phosphate dehydrogenase (375 aa).

The substrate site is built by Ser-45 and Thr-66. NAD(+) contacts are provided by Asp-146 and Thr-175. Arg-208 is a catalytic residue. Asp-232 lines the NAD(+) pocket. Residue Glu-237 is part of the active site. Residue His-254 is the Proton donor of the active site. Gly-257 serves as a coordination point for NAD(+). Position 258 (Tyr-258) interacts with substrate.

This sequence belongs to the D-isomer specific 2-hydroxyacid dehydrogenase family. PdxB subfamily. In terms of assembly, homodimer.

It localises to the cytoplasm. The catalysed reaction is 4-phospho-D-erythronate + NAD(+) = (R)-3-hydroxy-2-oxo-4-phosphooxybutanoate + NADH + H(+). It participates in cofactor biosynthesis; pyridoxine 5'-phosphate biosynthesis; pyridoxine 5'-phosphate from D-erythrose 4-phosphate: step 2/5. Its function is as follows. Catalyzes the oxidation of erythronate-4-phosphate to 3-hydroxy-2-oxo-4-phosphonooxybutanoate. The chain is Erythronate-4-phosphate dehydrogenase from Yersinia pseudotuberculosis serotype O:1b (strain IP 31758).